The primary structure comprises 357 residues: Histidinol-phosphate aminotransferase (357 aa).

An N6-(pyridoxal phosphate)lysine modification is found at Lys-218.

The protein belongs to the class-II pyridoxal-phosphate-dependent aminotransferase family. Histidinol-phosphate aminotransferase subfamily. As to quaternary structure, homodimer. Requires pyridoxal 5'-phosphate as cofactor.

It carries out the reaction L-histidinol phosphate + 2-oxoglutarate = 3-(imidazol-4-yl)-2-oxopropyl phosphate + L-glutamate. It functions in the pathway amino-acid biosynthesis; L-histidine biosynthesis; L-histidine from 5-phospho-alpha-D-ribose 1-diphosphate: step 7/9. The chain is Histidinol-phosphate aminotransferase from Chlorobium luteolum (strain DSM 273 / BCRC 81028 / 2530) (Pelodictyon luteolum).